Reading from the N-terminus, the 1002-residue chain is Glutamate receptor ionotropic, NMDA 3B (1002 aa).

The first 24 residues, 1–24 (MESVRTLWLSVALALAVGSRVVRG), serve as a signal peptide directing secretion. The Extracellular portion of the chain corresponds to 25–574 (HPQPCRVPTR…PIGAFMWPLH (550 aa)). Residues Asn69, Asn212, Asn344, Asn451, and Asn465 are each glycosylated (N-linked (GlcNAc...) asparagine). 2 cysteine pairs are disulfide-bonded: Cys439/Cys475 and Cys445/Cys476. Residues Ser531, Ser533, and Arg538 each coordinate glycine. Ser533 and Arg538 together coordinate D-serine. A helical membrane pass occupies residues 575–594 (WSMWVGVFAALHLTALFLTL). Residues 595-615 (YEWRSPYGLTPRGRNRGTVFS) are Cytoplasmic-facing. Residues 616–627 (YSSALNLCYAIL) constitute an intramembrane region (discontinuously helical). Residues 628–641 (FGRTVSSKTPKCPT) lie on the Cytoplasmic side of the membrane. Residues 642–661 (GRFLMNLWAIFCLLVLSSYT) traverse the membrane as a helical segment. The Extracellular segment spans residues 662 to 832 (ANLAAVMVGD…TLQMGVYHFS (171 aa)). A glycine-binding site is contributed by Ser701. D-serine is bound by residues Ser701, Ala702, and Asp745. Asp745 lines the glycine pocket. The N-linked (GlcNAc...) asparagine glycan is linked to Asn786. Residues 833-848 (GLFVLLCLGLGSALLT) form a helical membrane-spanning segment. Residues 849–1002 (SLGEHVFYRL…RLLHAAPAES (154 aa)) are Cytoplasmic-facing. The tract at residues 882-910 (ALNTGPPEGQQERAEQERSGPKDELPATD) is disordered. A compositionally biased stretch (basic and acidic residues) spans 891–906 (QQERAEQERSGPKDEL). Positions 944 to 985 (LCSNGPGLQAELRELELRIEAARERLRSALLRRGELRALLGD) form a coiled coil. The segment at 951-984 (LQAELRELELRIEAARERLRSALLRRGELRALLG) is involved in the trafficking and surface expression of NMDARs.

It belongs to the glutamate-gated ion channel (TC 1.A.10.1) family. NR3B/GRIN3B subfamily. In terms of assembly, forms heterotetrameric channels that contain at least two GluN1 subunits and at least a combination of one GluN2 and one GluN3 subunits (in vitro). Forms heterotetrameric channels composed of two GluN1/zeta subunits (GRIN1), and two identical GluN3 subunits (GRIN3A or GRIN3B) (in vitro). Does not form functional homomeric channels. In terms of tissue distribution, expressed in the hippocampus, the corpus callosum, in the facial and trigeminal nuclei of the brainstem and the ventral horn of the spinal cord.

It localises to the cell membrane. It is found in the postsynaptic cell membrane. The catalysed reaction is Ca(2+)(in) = Ca(2+)(out). It catalyses the reaction Na(+)(in) = Na(+)(out). Excitatory glycine receptors are inhibited by D-serine at a concentrion of 100uM. Its function is as follows. Component of a non-conventional N-methyl-D-aspartate (NMDA) receptors (NMDARs) that function as heterotetrameric, ligand-gated cation channels with low calcium permeability and low voltage-dependent block by Mg(2+). Forms glutamatergic receptor complexes with GluN1 and GluN2 subunits which are activated by glycine binding to the GluN1 and GluN3 subunits and L-glutamate binding to GluN2 subunits. Forms excitatory glycinergic receptor complexes with GluN1 alone which are activated by glycine binding to the GluN1 and GluN3 subunits. GluN3B subunit also binds D-serine and, in the absence of glycine, activates glycinergic receptor complexes, but with lower efficacy than glycine. Each GluN3 subunit confers differential attributes to channel properties, including activation, deactivation and desensitization kinetics, pH sensitivity, Ca2(+) permeability, and binding to allosteric modulators. The chain is Glutamate receptor ionotropic, NMDA 3B from Rattus norvegicus (Rat).